The following is a 213-amino-acid chain: Ribosomal RNA small subunit methyltransferase G (213 aa).

Residues glycine 75, phenylalanine 80, 128–129 (IE), and arginine 144 each bind S-adenosyl-L-methionine.

The protein belongs to the methyltransferase superfamily. RNA methyltransferase RsmG family.

It localises to the cytoplasm. It catalyses the reaction guanosine(527) in 16S rRNA + S-adenosyl-L-methionine = N(7)-methylguanosine(527) in 16S rRNA + S-adenosyl-L-homocysteine. Its function is as follows. Specifically methylates the N7 position of guanine in position 527 of 16S rRNA. The polypeptide is Ribosomal RNA small subunit methyltransferase G (Brucella ovis (strain ATCC 25840 / 63/290 / NCTC 10512)).